A 663-amino-acid chain; its full sequence is Ras and EF-hand domain-containing protein (663 aa).

EF-hand domains lie at 1–33 and 35–70; these read MNHAELRRLFAACDGNQSGRVEYEDFTTVCREL and VPADDIRTLFNKFDLDGDGYINFNDFSSSFQEVSEA. The Ca(2+) site is built by Asp14, Asn16, Ser18, Arg20, Asp25, Asp48, Asp50, Asp52, Tyr54, and Asp59. Positions 122-297 form a coiled coil; that stretch reads ELLLQQFEDL…LKKMVMEFQS (176 aa). Positions 324-336 are enriched in polar residues; the sequence is SQENASTKRQLSP. Residues 324 to 343 form a disordered region; sequence SQENASTKRQLSPRNEVLPR. GTP-binding positions include 477–482, 580–583, and 615–616; these read GSGKSS, NKVD, and AK.

This sequence belongs to the small GTPase superfamily. Rab family. As to quaternary structure, homodimer.

It localises to the cytoplasm. The protein resides in the perinuclear region. Its function is as follows. Binds predominantly GDP, and also GTP. The polypeptide is Ras and EF-hand domain-containing protein (rasef) (Danio rerio (Zebrafish)).